The following is a 1115-amino-acid chain: Rho GTPase-activating protein gacW (1115 aa).

Positions 661–691 (PPIGPPSTPTKSSNPGFQTLPKRPTRGPLYP) are disordered. Residues 699 to 880 (VTLTDKAQIN…FMIVNYFDIF (182 aa)) form the Rho-GAP domain. Disordered stretches follow at residues 888–1065 (SSDN…GDGK) and 1092–1115 (ESRTVSSLFQDDLDSNSDSSGPSL). Over residues 898–929 (DSTQSTCTTNNNNLVATSLSSPISPSTTPTKS) the composition is skewed to low complexity. Polar residues-rich tracts occupy residues 934–943 (LHTTVEVSRS) and 959–990 (RPISNNNGVSSNTPPLPNNVTPHHNTMPSRPS). The segment covering 1013–1046 (SNHSSSGQLNNNNSNNNTTSNSSNSSSGKSSSNP) has biased composition (low complexity).

It is found in the cytoplasm. In terms of biological role, rho GTPase-activating protein involved in the signal transduction pathway. This chain is Rho GTPase-activating protein gacW (gacW), found in Dictyostelium discoideum (Social amoeba).